We begin with the raw amino-acid sequence, 531 residues long: Phosphomethylpyrimidine synthase (531 aa).

Substrate-binding positions include N167, M196, Y225, H261, 281–283 (SRG), 322–325 (DALR), and E361. Position 365 (H365) interacts with Zn(2+). Y388 provides a ligand contact to substrate. Zn(2+) is bound at residue H429. 3 residues coordinate [4Fe-4S] cluster: C511, C514, and C519.

It belongs to the ThiC family. [4Fe-4S] cluster serves as cofactor.

It catalyses the reaction 5-amino-1-(5-phospho-beta-D-ribosyl)imidazole + S-adenosyl-L-methionine = 4-amino-2-methyl-5-(phosphooxymethyl)pyrimidine + CO + 5'-deoxyadenosine + formate + L-methionine + 3 H(+). The protein operates within cofactor biosynthesis; thiamine diphosphate biosynthesis. Its function is as follows. Catalyzes the synthesis of the hydroxymethylpyrimidine phosphate (HMP-P) moiety of thiamine from aminoimidazole ribotide (AIR) in a radical S-adenosyl-L-methionine (SAM)-dependent reaction. This chain is Phosphomethylpyrimidine synthase, found in Chlorobium chlorochromatii (strain CaD3).